The sequence spans 410 residues: MRSEERQLNLFGTSVNWSWPNLFKEREAPGMQLYDRALLFAVLSLICFGFVMVMSASMPEAQSLTGNPYHFAIRHFAYLVGCAVIAAVVLRIEMSRWQQFSPLLLLIVGIMLVAVLLVGTSVNGATRWLSVGPIRIQVAELAKFAFTIYMAGYLVRRHQEIRENAKGFYKPIAVFAVYAFLILMQPDLGTVVVLFVGTVGLLFLAGARLLDFFALILTGVMAFVALVLLEPYRMRRVTSFMDPWQDPFGSGYQLTQSLMAYGRGDWFGQGLGNSIQKLEYLPEAHTDFIFAVIGEELGFIGIVVVLSVLLFVALRAIKLGNLCIEIDKPFEGYLAYAIGIWFCFQTVVNVGASIGMLPTKGLTLPFISYGGSSLWVMTAAAMILIRIDHERRLSSIQAVQGKKVNDNREY.

The Cytoplasmic segment spans residues 1–37 (MRSEERQLNLFGTSVNWSWPNLFKEREAPGMQLYDRA). The helical transmembrane segment at 38–58 (LLFAVLSLICFGFVMVMSASM) threads the bilayer. The Periplasmic portion of the chain corresponds to 59-69 (PEAQSLTGNPY). The chain crosses the membrane as a helical span at residues 70–90 (HFAIRHFAYLVGCAVIAAVVL). The Cytoplasmic segment spans residues 91 to 99 (RIEMSRWQQ). A helical transmembrane segment spans residues 100-120 (FSPLLLLIVGIMLVAVLLVGT). Over 121–131 (SVNGATRWLSV) the chain is Periplasmic. A helical transmembrane segment spans residues 132–154 (GPIRIQVAELAKFAFTIYMAGYL). Residues 155 to 163 (VRRHQEIRE) lie on the Cytoplasmic side of the membrane. The helical transmembrane segment at 164 to 184 (NAKGFYKPIAVFAVYAFLILM) threads the bilayer. Topologically, residues 185-186 (QP) are periplasmic. A helical membrane pass occupies residues 187–207 (DLGTVVVLFVGTVGLLFLAGA). Position 208 (arginine 208) is a topological domain, cytoplasmic. Residues 209-229 (LLDFFALILTGVMAFVALVLL) traverse the membrane as a helical segment. At 230–291 (EPYRMRRVTS…PEAHTDFIFA (62 aa)) the chain is on the periplasmic side. A helical transmembrane segment spans residues 292–312 (VIGEELGFIGIVVVLSVLLFV). At 313–336 (ALRAIKLGNLCIEIDKPFEGYLAY) the chain is on the cytoplasmic side. The chain crosses the membrane as a helical span at residues 337 to 357 (AIGIWFCFQTVVNVGASIGML). Residues 358–364 (PTKGLTL) are Periplasmic-facing. Residues 365 to 385 (PFISYGGSSLWVMTAAAMILI) form a helical membrane-spanning segment. At 386–410 (RIDHERRLSSIQAVQGKKVNDNREY) the chain is on the cytoplasmic side.

Belongs to the SEDS family. FtsW subfamily.

The protein localises to the cell inner membrane. The enzyme catalyses [GlcNAc-(1-&gt;4)-Mur2Ac(oyl-L-Ala-gamma-D-Glu-L-Lys-D-Ala-D-Ala)](n)-di-trans,octa-cis-undecaprenyl diphosphate + beta-D-GlcNAc-(1-&gt;4)-Mur2Ac(oyl-L-Ala-gamma-D-Glu-L-Lys-D-Ala-D-Ala)-di-trans,octa-cis-undecaprenyl diphosphate = [GlcNAc-(1-&gt;4)-Mur2Ac(oyl-L-Ala-gamma-D-Glu-L-Lys-D-Ala-D-Ala)](n+1)-di-trans,octa-cis-undecaprenyl diphosphate + di-trans,octa-cis-undecaprenyl diphosphate + H(+). The protein operates within cell wall biogenesis; peptidoglycan biosynthesis. Peptidoglycan polymerase that is essential for cell division. The protein is Probable peptidoglycan glycosyltransferase FtsW of Shewanella sediminis (strain HAW-EB3).